The following is a 419-amino-acid chain: Voltage-gated potassium channel subunit beta-1 (419 aa).

Residues 1 to 52 are disordered; that stretch reads MLAARTGAAGSQISEENTKLRRQSGFSVAGKDKSPKKASENAKDSSLSPSGE. A compositionally biased stretch (basic and acidic residues) spans 30–43; sequence GKDKSPKKASENAK. NADP(+) is bound by residues Thr108, Trp109, Gln115, and Asp137. Residue Tyr142 is the Proton donor/acceptor of the active site. The NADP(+) site is built by Asn210, Ser240, Arg241, Gln266, Trp295, Ser296, Pro297, Leu298, Ala299, Cys300, Lys306, Arg316, Gly375, Ser377, Gln381, Glu384, and Asn385.

This sequence belongs to the shaker potassium channel beta subunit family. Homotetramer. Interaction with tetrameric potassium channel alpha subunits gives rise to a heterooctamer. Identified in potassium channel complexes containing KCNA1, KCNA2, KCNA4, KCNA5, KCNA6, KCNAB1 and KCNAB2. Part of a complex containing KCNA1, KCNA4 and LGI1; interaction with LGI1 inhibits down-regulation of KCNA1 channel activity. Interacts with the dimer formed by GNB1 and GNG2; this enhances KCNA1 binding. Interacts with SQSTM1. In terms of tissue distribution, in brain, expression is most prominent in caudate nucleus, hippocampus and thalamus. Significant expression also detected in amygdala and subthalamic nucleus. Also expressed in both healthy and cardiomyopathic heart. Up to four times more abundant in left ventricle than left atrium.

It is found in the cytoplasm. Its subcellular location is the membrane. It localises to the cell membrane. It carries out the reaction a primary alcohol + NADP(+) = an aldehyde + NADPH + H(+). The catalysed reaction is a secondary alcohol + NADP(+) = a ketone + NADPH + H(+). Functionally, regulatory subunit of the voltage-gated potassium (Kv) Shaker channels composed of pore-forming and potassium-conducting alpha subunits and of regulatory beta subunits. The beta-1/KCNAB1 cytoplasmic subunit mediates closure of delayed rectifier potassium channels by physically obstructing the pore via its N-terminal domain and increases the speed of channel closure for other family members. Promotes the inactivation of Kv1.1/KCNA1, Kv1.2/KCNA2, Kv1.4/KCNA4, Kv1.5/KCNA5 and Kv1.6/KCNA6 alpha subunit-containing channels. Displays nicotinamide adenine dinucleotide phosphate (NADPH)-dependent aldoketoreductase activity by catalyzing the NADPH-dependent reduction of a variety of endogenous aldehydes and ketones. The binding of NADPH is required for efficient down-regulation of potassium channel activity. Oxidation of the bound NADPH restrains N-terminal domain from blocking the channel, thereby decreasing N-type inactivation of potassium channel activity. In terms of biological role, isoform KvB1.2 shows no effect on KCNA1, KCNA2 or KCNB1. The polypeptide is Voltage-gated potassium channel subunit beta-1 (Homo sapiens (Human)).